A 30-amino-acid polypeptide reads, in one-letter code: Kalata-B14 (30 aa).

A cross-link (cyclopeptide (Gly-Asp)) is located at residues Gly1 to Asp30. Cystine bridges form between Cys5/Cys19, Cys9/Cys21, and Cys14/Cys27.

In terms of processing, this is a cyclic peptide.

In terms of biological role, probably participates in a plant defense mechanism. The sequence is that of Kalata-B14 from Oldenlandia affinis.